The sequence spans 699 residues: Endogenous retrovirus group K member 113 Env polyprotein (699 aa).

Residues 1-47 form a disordered region; it reads MNPSEMQRKAPPRRRRHRNRAPLTHKMNKMVTSEEQMKLPSTKKAEP. Residues 1–89 form the signal peptide; it reads MNPSEMQRKA…ALMIVSMVVS (89 aa). Basic residues predominate over residues 10–20; the sequence is APPRRRRHRNR. Residues 90–632 are Extracellular-facing; that stretch reads LPMPAGAAAA…NLNPVTWVKT (543 aa). N-linked (GlcNAc...) asparagine glycosylation is found at Asn100, Asn128, Asn153, Asn274, Asn355, Asn372, and Asn461. The segment at 466–486 is fusion peptide; the sequence is FIFTLIAVIMGLIAVTATAAV. Residues Asn507, Asn554, Asn566, and Asn585 are each glycosylated (N-linked (GlcNAc...) asparagine). The chain crosses the membrane as a helical span at residues 633–653; the sequence is IGSTTIINLILILVCLFCLLL. The Cytoplasmic segment spans residues 654–699; that stretch reads VCRCTQQLRRDSDHRERAMMTMAVLSKRKGGNVGKSKRDQIVTVSV.

Belongs to the beta type-B retroviral envelope protein family. HERV class-II K(HML-2) env subfamily. The surface (SU) and transmembrane (TM) proteins form a heterodimer. SU and TM are attached by noncovalent interactions or by a labile interchain disulfide bond. In terms of processing, specific enzymatic cleavages in vivo yield the mature SU and TM proteins.

The protein localises to the cell membrane. It is found in the virion. In terms of biological role, retroviral envelope proteins mediate receptor recognition and membrane fusion during early infection. Endogenous envelope proteins may have kept, lost or modified their original function during evolution. This endogenous envelope protein has lost its original fusogenic properties. Its function is as follows. SU mediates receptor recognition. TM anchors the envelope heterodimer to the viral membrane through one transmembrane domain. The other hydrophobic domain, called fusion peptide, mediates fusion of the viral membrane with the target cell membrane. This is Endogenous retrovirus group K member 113 Env polyprotein (HERVK_113) from Homo sapiens (Human).